The sequence spans 63 residues: Large ribosomal subunit protein uL29 (63 aa).

Belongs to the universal ribosomal protein uL29 family.

This Shewanella loihica (strain ATCC BAA-1088 / PV-4) protein is Large ribosomal subunit protein uL29.